The chain runs to 201 residues: Recombination protein RecR (201 aa).

Residues 57 to 74 (CRICGFITSKDDDPCVIC) form a C4-type zinc finger. The Toprim domain maps to 82 to 178 (SKIFVVENSQ…KVTRLARGLS (97 aa)).

The protein belongs to the RecR family.

In terms of biological role, may play a role in DNA repair. It seems to be involved in an RecBC-independent recombinational process of DNA repair. It may act with RecF and RecO. The polypeptide is Recombination protein RecR (Oenococcus oeni (strain ATCC BAA-331 / PSU-1)).